We begin with the raw amino-acid sequence, 357 residues long: Fructose-1,6-bisphosphatase class 1 2 (357 aa).

The Mg(2+) site is built by E90, D112, L114, and D115. Substrate-binding positions include D115–S118 and N206. Mg(2+) is bound at residue E278.

The protein belongs to the FBPase class 1 family. In terms of assembly, homotetramer. Mg(2+) is required as a cofactor.

The protein resides in the cytoplasm. It carries out the reaction beta-D-fructose 1,6-bisphosphate + H2O = beta-D-fructose 6-phosphate + phosphate. The protein operates within carbohydrate biosynthesis; gluconeogenesis. In Dechloromonas aromatica (strain RCB), this protein is Fructose-1,6-bisphosphatase class 1 2.